The following is a 403-amino-acid chain: Methylthioribose-1-phosphate isomerase (403 aa).

Asp280 (proton donor) is an active-site residue.

The protein belongs to the eIF-2B alpha/beta/delta subunits family. MtnA subfamily.

It is found in the cytoplasm. It localises to the nucleus. The catalysed reaction is 5-(methylsulfanyl)-alpha-D-ribose 1-phosphate = 5-(methylsulfanyl)-D-ribulose 1-phosphate. Its pathway is amino-acid biosynthesis; L-methionine biosynthesis via salvage pathway; L-methionine from S-methyl-5-thio-alpha-D-ribose 1-phosphate: step 1/6. Functionally, catalyzes the interconversion of methylthioribose-1-phosphate (MTR-1-P) into methylthioribulose-1-phosphate (MTRu-1-P). The sequence is that of Methylthioribose-1-phosphate isomerase from Eremothecium gossypii (strain ATCC 10895 / CBS 109.51 / FGSC 9923 / NRRL Y-1056) (Yeast).